The following is a 237-amino-acid chain: MPLPEYGTDNSDNFVRFIYFEIKKNSVKPPSFPKLGKYLENHCKGGDYMCVINNYIYFLIIIDLEYLVKWIKCYSDNVLKGTIKLLTNYYSKLYYIKLSLSHWLFSLCNLPLEDEMLFLSCGSLVKYQDASTHKLYKLEYLTKLILGYNRINVDNCICSIKVFAISTFERFLYHEFENNAFKLIMLHKRTSFNVYKVKTSKIALLNILEKIGRTYKRYLHTLKTPKNLTTTEVVRHG.

This is an uncharacterized protein from Methanocaldococcus jannaschii (strain ATCC 43067 / DSM 2661 / JAL-1 / JCM 10045 / NBRC 100440) (Methanococcus jannaschii).